Consider the following 394-residue polypeptide: Protein NDRG1 (394 aa).

S2 carries the post-translational modification N-acetylserine. Phosphoserine occurs at positions 2, 319, and 326. The disordered stretch occupies residues 325 to 394 (RSRTASGSSV…AGPKSMEVSC (70 aa)). A compositionally biased stretch (polar residues) spans 327–339 (RTASGSSVTSLDG). Residue T328 is modified to Phosphothreonine; by SGK1. A phosphoserine; by SGK1 mark is found at S330 and S332. S333 bears the Phosphoserine mark. T335 is modified (phosphothreonine). S336 carries the post-translational modification Phosphoserine. Tandem repeats lie at residues 339–348 (GTRSRSHTSE), 349–358 (GTRSRSHTSE), and 359–368 (GTRSRSHTSE). Residues 339–368 (GTRSRSHTSEGTRSRSHTSEGTRSRSHTSE) form a 3 X 10 AA tandem repeats of G-T-R-S-R-S-H-T-S-E region. The residue at position 340 (T340) is a Phosphothreonine. A Phosphoserine modification is found at S342. Residues 345–371 (HTSEGTRSRSHTSEGTRSRSHTSEGAH) are compositionally biased toward basic and acidic residues. T346 carries the phosphothreonine; by SGK1 modification. The residue at position 352 (S352) is a Phosphoserine. T356 is modified (phosphothreonine; by SGK1). S362 is modified (phosphoserine). The residue at position 364 (S364) is a Phosphoserine; by SGK1. T366 is subject to Phosphothreonine; by SGK1. Phosphothreonine is present on T375.

Belongs to the NDRG family. Interacts with RAB4A (membrane-bound form); the interaction involves NDRG1 in vesicular recycling of CDH1. Post-translationally, under stress conditions, phosphorylated in the C-terminal on many serine and threonine residues. Phosphorylated in vitro by PKA. Phosphorylation enhanced by increased intracellular cAMP levels. Homocysteine induces dephosphorylation. Phosphorylation by SGK1 is cell cycle dependent. As to expression, ubiquitous; expressed most prominently in placental membranes and prostate, kidney, small intestine, and ovary tissues. Also expressed in heart, brain, skeletal muscle, lung, liver and pancreas. Low levels in peripheral blood leukocytes and in tissues of the immune system. Expressed mainly in epithelial cells. Also found in Schwann cells of peripheral neurons. Reduced expression in adenocarcinomas compared to normal tissues. In colon, prostate and placental membranes, the cells that border the lumen show the highest expression.

Its subcellular location is the cytoplasm. It localises to the cytosol. It is found in the cytoskeleton. The protein resides in the microtubule organizing center. The protein localises to the centrosome. Its subcellular location is the nucleus. It localises to the cell membrane. Functionally, stress-responsive protein involved in hormone responses, cell growth, and differentiation. Acts as a tumor suppressor in many cell types. Necessary but not sufficient for p53/TP53-mediated caspase activation and apoptosis. Has a role in cell trafficking, notably of the Schwann cell, and is necessary for the maintenance and development of the peripheral nerve myelin sheath. Required for vesicular recycling of CDH1 and TF. May also function in lipid trafficking. Protects cells from spindle disruption damage. Functions in p53/TP53-dependent mitotic spindle checkpoint. Regulates microtubule dynamics and maintains euploidy. This chain is Protein NDRG1 (NDRG1), found in Homo sapiens (Human).